The following is a 477-amino-acid chain: Argininosuccinate lyase (477 aa).

It belongs to the lyase 1 family. Argininosuccinate lyase subfamily.

It is found in the cytoplasm. The catalysed reaction is 2-(N(omega)-L-arginino)succinate = fumarate + L-arginine. Its pathway is amino-acid biosynthesis; L-arginine biosynthesis; L-arginine from L-ornithine and carbamoyl phosphate: step 3/3. The sequence is that of Argininosuccinate lyase from Acinetobacter baumannii (strain AB307-0294).